Consider the following 765-residue polypeptide: Protein PAT1 homolog 1 (765 aa).

Disordered regions lie at residues 1 to 98 (MFRF…DERG), 119 to 147 (GVGS…LAGP), and 210 to 244 (LPNR…SPPV). Residues 7 to 30 (LDDDCTLEEEEGLVEEEDEIDQFN) show a composition bias toward acidic residues. Residues 45 to 59 (EEHTRLAELDERVRD) are compositionally biased toward basic and acidic residues. Residues 218-227 (SRDEGRDLSE) show a composition bias toward basic and acidic residues. Residues Ser235 and Ser236 each carry the phosphoserine modification. Residues 235–244 (SSPVIGSPPV) show a composition bias toward low complexity.

Belongs to the PAT1 family. Interacts with ribonucleoprotein complex components.

It localises to the cytoplasm. The protein resides in the P-body. Its subcellular location is the nucleus. It is found in the PML body. The protein localises to the nucleus speckle. RNA-binding protein involved in deadenylation-dependent decapping of mRNAs, leading to the degradation of mRNAs. Acts as a scaffold protein that connects deadenylation and decapping machinery. Required for cytoplasmic mRNA processing body (P-body) assembly. The chain is Protein PAT1 homolog 1 (patl1) from Danio rerio (Zebrafish).